We begin with the raw amino-acid sequence, 114 residues long: C-X-C motif chemokine 5 (114 aa).

Positions Met-1–Ser-36 are cleaved as a signal peptide. Disulfide bonds link Cys-49-Cys-75 and Cys-51-Cys-91.

It belongs to the intercrine alpha (chemokine CxC) family. Monomer. Homodimer. N-terminal processed forms ENA-78(8-78) and ENA-78(9-78) are produced by proteolytic cleavage after secretion from peripheral blood monocytes.

The protein resides in the secreted. Functionally, involved in neutrophil activation. In vitro, ENA-78(8-78) and ENA-78(9-78) show a threefold higher chemotactic activity for neutrophil granulocytes. The chain is C-X-C motif chemokine 5 (CXCL5) from Homo sapiens (Human).